We begin with the raw amino-acid sequence, 804 residues long: Phenylalanine--tRNA ligase beta subunit (804 aa).

A tRNA-binding domain is found at 40–161; the sequence is FSMIDYLIIG…KANLGDTEVY (122 aa). A B5 domain is found at 413-486; that stretch reads EYHQQVKVNY…KILNINLFQP (74 aa). Mg(2+) is bound by residues D464, D470, E473, and E474. The FDX-ACB domain maps to 710-804; it reads DHYQEVTRDI…DLMKTKQILI (95 aa).

Belongs to the phenylalanyl-tRNA synthetase beta subunit family. Type 1 subfamily. In terms of assembly, tetramer of two alpha and two beta subunits. Mg(2+) serves as cofactor.

It is found in the cytoplasm. It carries out the reaction tRNA(Phe) + L-phenylalanine + ATP = L-phenylalanyl-tRNA(Phe) + AMP + diphosphate + H(+). This Mycoplasmoides gallisepticum (strain R(low / passage 15 / clone 2)) (Mycoplasma gallisepticum) protein is Phenylalanine--tRNA ligase beta subunit.